We begin with the raw amino-acid sequence, 206 residues long: Dephospho-CoA kinase (206 aa).

Positions 6 to 206 (IIGLTGGIAS…KWKWKDWSKK (201 aa)) constitute a DPCK domain. Residue 14 to 19 (ASGKST) participates in ATP binding.

It belongs to the CoaE family.

It localises to the cytoplasm. The enzyme catalyses 3'-dephospho-CoA + ATP = ADP + CoA + H(+). It participates in cofactor biosynthesis; coenzyme A biosynthesis; CoA from (R)-pantothenate: step 5/5. Catalyzes the phosphorylation of the 3'-hydroxyl group of dephosphocoenzyme A to form coenzyme A. This Carboxydothermus hydrogenoformans (strain ATCC BAA-161 / DSM 6008 / Z-2901) protein is Dephospho-CoA kinase.